The sequence spans 297 residues: Nucleotide-binding protein Bxeno_A0336 (297 aa).

8–15 contributes to the ATP binding site; the sequence is GISGSGKS. Position 57–60 (57–60) interacts with GTP; the sequence is DARS.

Belongs to the RapZ-like family.

Displays ATPase and GTPase activities. The sequence is that of Nucleotide-binding protein Bxeno_A0336 from Paraburkholderia xenovorans (strain LB400).